The sequence spans 366 residues: MRAIIIGIGQCGTKIADIFSLVDFEALAINTSRGDLEYLKHIPPDRRILIGESIVGGKGVNANPVLGREAMKRDLPMVMKKISSLVGFEDVDIFFLTFGFGGGTGAGGTPVLAEALKEEYPDSLVVAIGALPLKEEGIRPTINAAITIDKLSKIVDSIIAIDNNKLKESNEDISQAYERINYAIVERIASLLALIDVPGEQTLDASDLKFVLRAMGSFATVGYAKADATKIKSLSRLIIRSFENEGLYLDVNIESALYGLVAIHGPPEALKANEIFEALNELTQRIRGKQIFRGFYPDPREREVEVVTLLSGIYESKSIEEIVITAKKYAQEFLKAKEEGESKKKKLLSGLPDFDDIYPGEADDQS.

Residues 10–14 (QCGTK), 103–105 (GTG), E136, N163, and N181 each bind GTP.

Belongs to the CetZ family.

It localises to the cytoplasm. In terms of biological role, involved in cell shape control. This chain is Tubulin-like protein CetZ, found in Pyrococcus furiosus (strain ATCC 43587 / DSM 3638 / JCM 8422 / Vc1).